The primary structure comprises 697 residues: Exocyst complex component 7 (697 aa).

The segment at 1-384 is SEC8 and ARHQ binding; that stretch reads MIPPQEASAR…FSTVLTVFPI (384 aa). Coiled coils occupy residues 5–42 and 63–85; these read QEAS…TRNM and VHKQ…SCLD. Residue S133 is modified to Phosphoserine. Positions 238–270 are disordered; sequence FRKSSSSSGVPYSPAIPNKRKDTPTKKPIKRPG.

Belongs to the EXO70 family. In terms of assembly, the exocyst complex is composed of EXOC1, EXOC2, EXOC3, EXOC4, EXOC5, EXOC6, EXOC7 and EXOC8. Interacts with RAB11FIP3. Interacts with ARHQ in a GTP-dependent manner.

The protein localises to the cytoplasm. It is found in the cytosol. The protein resides in the cell membrane. Its subcellular location is the midbody. It localises to the midbody ring. In terms of biological role, component of the exocyst complex involved in the docking of exocytic vesicles with fusion sites on the plasma membrane. In adipocytes, plays a crucial role in targeting SLC2A4 vesicle to the plasma membrane in response to insulin, perhaps directing the vesicle to the precise site of fusion. It is required for neuron survival and plays an essential role in cortical development. The polypeptide is Exocyst complex component 7 (Exoc7) (Mus musculus (Mouse)).